A 423-amino-acid polypeptide reads, in one-letter code: Riboflavin biosynthesis protein RibBA (423 aa).

A DHBP synthase region spans residues 1-204; that stretch reads MTRLDSVERA…IADLIEWRRK (204 aa). D-ribulose 5-phosphate is bound by residues 28–29, Asp33, 141–145, and Glu165; these read RE and RPGHT. Residue Glu29 participates in Mg(2+) binding. His144 lines the Mg(2+) pocket. The GTP cyclohydrolase II stretch occupies residues 205-423; it reads HEKHIARVAE…AVPGEFGGAV (219 aa). Position 259 to 263 (259 to 263) interacts with GTP; sequence RVHSE. Zn(2+) contacts are provided by Cys264, Cys275, and Cys277. GTP contacts are provided by residues Gln280, 303 to 305, and Thr325; that span reads EGR. Asp337 (proton acceptor; for GTP cyclohydrolase activity) is an active-site residue. Residue Arg339 is the Nucleophile; for GTP cyclohydrolase activity of the active site. Residues Thr360 and Lys365 each contribute to the GTP site.

The protein in the N-terminal section; belongs to the DHBP synthase family. In the C-terminal section; belongs to the GTP cyclohydrolase II family. Mg(2+) is required as a cofactor. Mn(2+) serves as cofactor. It depends on Zn(2+) as a cofactor.

The enzyme catalyses D-ribulose 5-phosphate = (2S)-2-hydroxy-3-oxobutyl phosphate + formate + H(+). It carries out the reaction GTP + 4 H2O = 2,5-diamino-6-hydroxy-4-(5-phosphoribosylamino)-pyrimidine + formate + 2 phosphate + 3 H(+). Its pathway is cofactor biosynthesis; riboflavin biosynthesis; 2-hydroxy-3-oxobutyl phosphate from D-ribulose 5-phosphate: step 1/1. It participates in cofactor biosynthesis; riboflavin biosynthesis; 5-amino-6-(D-ribitylamino)uracil from GTP: step 1/4. Catalyzes the conversion of D-ribulose 5-phosphate to formate and 3,4-dihydroxy-2-butanone 4-phosphate. Its function is as follows. Catalyzes the conversion of GTP to 2,5-diamino-6-ribosylamino-4(3H)-pyrimidinone 5'-phosphate (DARP), formate and pyrophosphate. In Mycolicibacterium gilvum (strain PYR-GCK) (Mycobacterium gilvum (strain PYR-GCK)), this protein is Riboflavin biosynthesis protein RibBA.